The following is a 250-amino-acid chain: Methionine aminopeptidase (250 aa).

H77 is a binding site for substrate. A divalent metal cation is bound by residues D94, D105, and H169. H176 is a binding site for substrate. Positions 202 and 235 each coordinate a divalent metal cation.

This sequence belongs to the peptidase M24A family. Methionine aminopeptidase type 1 subfamily. As to quaternary structure, monomer. It depends on Co(2+) as a cofactor. Zn(2+) is required as a cofactor. Mn(2+) serves as cofactor. Requires Fe(2+) as cofactor.

The catalysed reaction is Release of N-terminal amino acids, preferentially methionine, from peptides and arylamides.. Its function is as follows. Removes the N-terminal methionine from nascent proteins. The N-terminal methionine is often cleaved when the second residue in the primary sequence is small and uncharged (Met-Ala-, Cys, Gly, Pro, Ser, Thr, or Val). Requires deformylation of the N(alpha)-formylated initiator methionine before it can be hydrolyzed. This is Methionine aminopeptidase from Mycoplasmoides gallisepticum (strain R(low / passage 15 / clone 2)) (Mycoplasma gallisepticum).